Consider the following 481-residue polypeptide: MVENQKAMPQPEMRRIRRIHFVGIGGVGMCGIAEVLLNLGYQVSGSDLKESPVTDRLKSFGAQIFIGHRAENAAEADVLVVSSAVNTSNPEVATALERRIPVVPRAEMLAELMRYRHGIAVAGTHGKTTTTSLIASVFAAGGLDPTFVIGGRLNAAGTNAQLGTSRYLIAEADESDASFLHLQPLVAVVTNIDADHMATYDGDFNKLKKTFVEFLHNLPFYGLAVVCLDDPVVREILPQVKRPTVTYGFSEDADVRAINVRQEGMQTYFTVLRPDREPLDVSVNMPGNHNVLNSLATICIATDEGVSDEAIVEGLSRFAGVGRRFQVYGQLPVEGGDVMLVDDYGHHPTEVAAVIKAVRGGWPERRLVMVYQPHRYSRTRDLYDDFVNVLADANVLLLMEVYPAGEEPIPGADSRKLCNSIRQRGQLDPIYIERGVDLAPIVKPLLRAGDILLCQGAGDIGGLAPKLLASPLFAAAQGKSK.

Residue 123–129 participates in ATP binding; the sequence is GTHGKTT.

This sequence belongs to the MurCDEF family.

The protein resides in the cytoplasm. The enzyme catalyses UDP-N-acetyl-alpha-D-muramate + L-alanine + ATP = UDP-N-acetyl-alpha-D-muramoyl-L-alanine + ADP + phosphate + H(+). It functions in the pathway cell wall biogenesis; peptidoglycan biosynthesis. Cell wall formation. This is UDP-N-acetylmuramate--L-alanine ligase from Pseudomonas fluorescens (strain SBW25).